We begin with the raw amino-acid sequence, 869 residues long: Ribonucleoside-diphosphate reductase large chain 2 (869 aa).

Residues 1–92 (MYVIKRDGRK…ISNLHKQTTK (92 aa)) form the ATP-cone domain. ATP contacts are provided by residues 5–6 (KR), 11–17 (EPVQFDK), Thr53, and Asp57. Positions 202 and 217 each coordinate GDP. Cys218 and Cys443 form a disulfide bridge. DTTP-binding positions include 226-228 (DSI), Lys243, Arg256, and 263-264 (AG). At Ser227 the chain carries Phosphoserine. Residue Lys387 forms a Glycyl lysine isopeptide (Lys-Gly) (interchain with G-Cter in ubiquitin) linkage. Position 426 (Asn426) interacts with GDP. The active-site Proton acceptor is Asn426. Residue Cys428 is the Cysteine radical intermediate of the active site. GDP contacts are provided by residues Glu430 and 608-611 (TAST). The active-site Proton acceptor is the Glu430. The interval 793-843 (SALTESSDNEKDASPVPSEQSSVSSAMSNVKLEDSVAPAVPTETIKEDSDE) is disordered. Phosphoserine is present on residues Ser806, Ser827, and Ser868. Over residues 806–820 (SPVPSEQSSVSSAMS) the composition is skewed to low complexity.

Belongs to the ribonucleoside diphosphate reductase large chain family. In terms of assembly, heterotetramer of two large (R1) and two small (R2) subunits. S.cerevisiae has two different R1 subunits (RNR1 and RNR3) and two different R2 subunits (RNR2 and RNR4). The functional form of the small subunits is a RNR2-RNR4 heterodimer, where RNR2 provides the iron-radical center and RNR4 is required for proper folding of RNR2 and assembly with the large subunits. Under normal growth conditions, the active form of the large subunits is a homodimer of the constitutively expressed RNR1. In damaged cells or cells arrested for DNA synthesis, the reductase consists of multiple species because of the association of the small subunits (RNR2-RNR4) with either the RNR1 homodimer or a heterodimer of RNR1 and the damage-inducible RNR3.

The protein resides in the cytoplasm. It carries out the reaction a 2'-deoxyribonucleoside 5'-diphosphate + [thioredoxin]-disulfide + H2O = a ribonucleoside 5'-diphosphate + [thioredoxin]-dithiol. Under complex allosteric control mediated by deoxynucleoside triphosphates and ATP binding to separate specificity and activation sites on the large subunit. The type of nucleotide bound at the specificity site determines substrate preference. It seems probable that ATP makes the enzyme reduce CDP and UDP, dGTP favors ADP reduction and dTTP favors GDP reduction. Stimulated by ATP and inhibited by dATP binding to the activity site. Its function is as follows. Provides the precursors necessary for DNA synthesis. Catalyzes the biosynthesis of deoxyribonucleotides from the corresponding ribonucleotides. This Saccharomyces cerevisiae (strain ATCC 204508 / S288c) (Baker's yeast) protein is Ribonucleoside-diphosphate reductase large chain 2 (RNR3).